A 223-amino-acid chain; its full sequence is DNA mismatch repair protein MutH (223 aa).

The protein belongs to the MutH family.

It localises to the cytoplasm. Functionally, sequence-specific endonuclease that cleaves unmethylated GATC sequences. It is involved in DNA mismatch repair. The chain is DNA mismatch repair protein MutH from Shewanella baltica (strain OS185).